The following is a 178-amino-acid chain: Large ribosomal subunit protein uL6 (178 aa).

This sequence belongs to the universal ribosomal protein uL6 family. In terms of assembly, part of the 50S ribosomal subunit.

Functionally, this protein binds to the 23S rRNA, and is important in its secondary structure. It is located near the subunit interface in the base of the L7/L12 stalk, and near the tRNA binding site of the peptidyltransferase center. The polypeptide is Large ribosomal subunit protein uL6 (Streptococcus pneumoniae serotype 4 (strain ATCC BAA-334 / TIGR4)).